Here is a 218-residue protein sequence, read N- to C-terminus: MNQSSLLAEFGEPITRVENALQALREGRGVLLLDDEDRENEGDIIYSVEHLTNAQMALMIRECSGIVCLCLTDEQANQLELPPMVVDNNSANQTAFTVTIEAKVGVTTGVSAADRVTTIKTAANPTAKPTDLARPGHVFPLRARKGGVLARRGHTEGTVDLMQMAGLQSAGVLCEVTNPDGTMAKAPEIVAFGKMHNMPVLTIEDMVMYRTEFDLKLA.

D-ribulose 5-phosphate contacts are provided by residues 38–39 (RE), Asp43, 151–155 (RRGHT), and Glu175. Glu39 serves as a coordination point for Mg(2+). A Mg(2+)-binding site is contributed by His154.

Belongs to the DHBP synthase family. As to quaternary structure, homodimer. The cofactor is Mg(2+). Requires Mn(2+) as cofactor.

It carries out the reaction D-ribulose 5-phosphate = (2S)-2-hydroxy-3-oxobutyl phosphate + formate + H(+). It participates in cofactor biosynthesis; riboflavin biosynthesis; 2-hydroxy-3-oxobutyl phosphate from D-ribulose 5-phosphate: step 1/1. Its function is as follows. Catalyzes the conversion of D-ribulose 5-phosphate to formate and 3,4-dihydroxy-2-butanone 4-phosphate. This is 3,4-dihydroxy-2-butanone 4-phosphate synthase from Vibrio atlanticus (strain LGP32) (Vibrio splendidus (strain Mel32)).